The primary structure comprises 224 residues: tRNA (guanine-N(7)-)-methyltransferase (224 aa).

4 residues coordinate S-adenosyl-L-methionine: E45, E70, D97, and D119. D119 is an active-site residue. Residues K123, D155, and 199–202 each bind substrate; that span reads TEYE.

Belongs to the class I-like SAM-binding methyltransferase superfamily. TrmB family.

It carries out the reaction guanosine(46) in tRNA + S-adenosyl-L-methionine = N(7)-methylguanosine(46) in tRNA + S-adenosyl-L-homocysteine. Its pathway is tRNA modification; N(7)-methylguanine-tRNA biosynthesis. Functionally, catalyzes the formation of N(7)-methylguanine at position 46 (m7G46) in tRNA. The chain is tRNA (guanine-N(7)-)-methyltransferase from Ureaplasma parvum serovar 3 (strain ATCC 27815 / 27 / NCTC 11736).